We begin with the raw amino-acid sequence, 361 residues long: Aminomethyltransferase (361 aa).

It belongs to the GcvT family. The glycine cleavage system is composed of four proteins: P, T, L and H.

The catalysed reaction is N(6)-[(R)-S(8)-aminomethyldihydrolipoyl]-L-lysyl-[protein] + (6S)-5,6,7,8-tetrahydrofolate = N(6)-[(R)-dihydrolipoyl]-L-lysyl-[protein] + (6R)-5,10-methylene-5,6,7,8-tetrahydrofolate + NH4(+). Its function is as follows. The glycine cleavage system catalyzes the degradation of glycine. The protein is Aminomethyltransferase of Herpetosiphon aurantiacus (strain ATCC 23779 / DSM 785 / 114-95).